A 1132-amino-acid polypeptide reads, in one-letter code: BTB/POZ domain-containing protein 7 (1132 aa).

Residues 1–10 (MGANASNYPH) are compositionally biased toward polar residues. Positions 1–24 (MGANASNYPHSCSPRVGGNSQAQQ) are disordered. Residue Gly2 is the site of N-myristoyl glycine attachment. 2 consecutive BTB domains span residues 142 to 211 (TDVD…GMED) and 247 to 341 (YDVV…DLSV). The 67-residue stretch at 413-479 (YGSKWVHRQA…WGEHQLMKRI (67 aa)) folds into the BACK domain. Residue Ser722 is modified to Phosphoserine. Disordered regions lie at residues 897-1019 (LSQS…HLHR) and 1035-1132 (QRSD…KSAL). The span at 918 to 927 (RHTHTSRKKH) shows a compositional bias: basic residues. 4 stretches are compositionally biased toward basic and acidic residues: residues 928-939 (TLEQKTDTRENP), 1000-1019 (KKQEEARREYPLSPDGHLHR), 1083-1093 (PEERSGRRLAD), and 1105-1114 (TDLEREDSIS). The residue at position 1012 (Ser1012) is a Phosphoserine.

It localises to the nucleus. Its function is as follows. Acts as a mediator of epithelial dynamics and organ branching by promoting cleft progression. Induced following accumulation of fibronectin in forming clefts, leading to local expression of the cell-scattering SNAIL2 and suppression of E-cadherin levels, thereby altering cell morphology and reducing cell-cell adhesion. This stimulates cell separation at the base of forming clefts by local, dynamic intercellular gap formation and promotes cleft progression. In Homo sapiens (Human), this protein is BTB/POZ domain-containing protein 7 (BTBD7).